The primary structure comprises 392 residues: Succinyl-diaminopimelate desuccinylase (392 aa).

Histidine 77 serves as a coordination point for Zn(2+). The active site involves aspartate 79. Aspartate 110 contributes to the Zn(2+) binding site. The active-site Proton acceptor is the glutamate 144. Positions 145, 173, and 359 each coordinate Zn(2+).

The protein belongs to the peptidase M20A family. DapE subfamily. In terms of assembly, homodimer. Zn(2+) serves as cofactor. It depends on Co(2+) as a cofactor.

The enzyme catalyses N-succinyl-(2S,6S)-2,6-diaminopimelate + H2O = (2S,6S)-2,6-diaminopimelate + succinate. It participates in amino-acid biosynthesis; L-lysine biosynthesis via DAP pathway; LL-2,6-diaminopimelate from (S)-tetrahydrodipicolinate (succinylase route): step 3/3. In terms of biological role, catalyzes the hydrolysis of N-succinyl-L,L-diaminopimelic acid (SDAP), forming succinate and LL-2,6-diaminopimelate (DAP), an intermediate involved in the bacterial biosynthesis of lysine and meso-diaminopimelic acid, an essential component of bacterial cell walls. The sequence is that of Succinyl-diaminopimelate desuccinylase from Thiobacillus denitrificans (strain ATCC 25259 / T1).